Here is a 260-residue protein sequence, read N- to C-terminus: Pyridoxine 5'-phosphate synthase (260 aa).

Asparagine 15 serves as a coordination point for 3-amino-2-oxopropyl phosphate. 17 to 18 (DH) contributes to the 1-deoxy-D-xylulose 5-phosphate binding site. Arginine 26 lines the 3-amino-2-oxopropyl phosphate pocket. The active-site Proton acceptor is histidine 51. Arginine 53 and histidine 58 together coordinate 1-deoxy-D-xylulose 5-phosphate. Catalysis depends on glutamate 78, which acts as the Proton acceptor. Position 108 (threonine 108) interacts with 1-deoxy-D-xylulose 5-phosphate. The active-site Proton donor is histidine 199. 3-amino-2-oxopropyl phosphate-binding positions include glycine 200 and 221–222 (GH).

It belongs to the PNP synthase family. In terms of assembly, homooctamer; tetramer of dimers.

The protein localises to the cytoplasm. It catalyses the reaction 3-amino-2-oxopropyl phosphate + 1-deoxy-D-xylulose 5-phosphate = pyridoxine 5'-phosphate + phosphate + 2 H2O + H(+). It functions in the pathway cofactor biosynthesis; pyridoxine 5'-phosphate biosynthesis; pyridoxine 5'-phosphate from D-erythrose 4-phosphate: step 5/5. Functionally, catalyzes the complicated ring closure reaction between the two acyclic compounds 1-deoxy-D-xylulose-5-phosphate (DXP) and 3-amino-2-oxopropyl phosphate (1-amino-acetone-3-phosphate or AAP) to form pyridoxine 5'-phosphate (PNP) and inorganic phosphate. This Cupriavidus necator (strain ATCC 17699 / DSM 428 / KCTC 22496 / NCIMB 10442 / H16 / Stanier 337) (Ralstonia eutropha) protein is Pyridoxine 5'-phosphate synthase.